A 328-amino-acid polypeptide reads, in one-letter code: P2Y purinoceptor 6 (328 aa).

Over 1 to 27 (MEQDNGTIQAPGLPPTTCVYREDFKRL) the chain is Extracellular. Residue N5 is glycosylated (N-linked (GlcNAc...) asparagine). The chain crosses the membrane as a helical span at residues 28–48 (LLTPVYSVVLVVGLPLNICVI). Residues 49-62 (AQICASRRTLTRSA) lie on the Cytoplasmic side of the membrane. Residues 63 to 83 (VYTLNLALADLMYACSLPLLI) traverse the membrane as a helical segment. Over 84 to 101 (YNYARGDHWPFGDLACRF) the chain is Extracellular. Cysteines 99 and 177 form a disulfide. A helical transmembrane segment spans residues 102–122 (VRFLFYANLHGSILFLTCISF). At 123-144 (QRYLGICHPLASWHKRGGRRAA) the chain is on the cytoplasmic side. Residues 145 to 165 (WVVCGVVWLAVTAQCLPTAVF) traverse the membrane as a helical segment. Residues 166–194 (AATGIQRNRTVCYDLSPPILSTRYLPYGM) lie on the Extracellular side of the membrane. N173 carries an N-linked (GlcNAc...) asparagine glycan. A helical membrane pass occupies residues 195-215 (ALTVIGFLLPFIALLACYCRM). The Cytoplasmic segment spans residues 216 to 236 (ARRLCRQDGPAGPVAQERRSK). Residues 237–257 (AARMAVVVAAVFAISFLPFHI) traverse the membrane as a helical segment. Residues 258–280 (TKTAYLAVRSTPGVSCPVLETFA) lie on the Extracellular side of the membrane. Residues 281–303 (AAYKGTRPFASVNSVLDPILFYF) form a helical membrane-spanning segment. Topologically, residues 304 to 328 (TQQKFRRQPHDLLQRLTAKWQRQRV) are cytoplasmic.

The protein belongs to the G-protein coupled receptor 1 family.

The protein resides in the cell membrane. In terms of biological role, receptor for extracellular UTP &gt; ADP = 2-methylthio-ATP &gt; ADP-beta-S &gt; ATP = ATP-gamma-S. The activity of this receptor is mediated by G proteins which activate a phosphatidylinositol-calcium second messenger system. Functionally coupled to phospholipase C. The chain is P2Y purinoceptor 6 (P2ry6) from Mus musculus (Mouse).